The primary structure comprises 556 residues: MTSAGVAPTALRLLTALLLLLVAAPSHSLPLLTRGRWIVDEATGLRVKLACVNWVGHLEPGLPEGLNRLPVATVAHTISSLGFNCVRLTYSIHMLTRTSYTNATVAQTFARLNLTEAASGIEHNNPELLDLGHVAAYHHVVAALSEAGVMVILDNHVSKPKWCCAVDDGNGFFGDRYFNPNTWVEGLGLMATYFNNTPNVVAMSLRNELRGNRSTPISWSRHMQWGAATVHKANPKVLVILSGLQFDTDLSFLPVLPVTLPFKEKIVYEGHWYSFGVPWRTGLPNDVCKNETGRFKSNVGFVTSSANATAAPLFMSEFGIDQRYVNDNDNRYLNCILAYLAEEDLDWALWTMGGSYYYRSDKQPVKDFEETYGFFNHDWSRIRNPDFISRLKEIQQPIQDPYLAPGPYYQIIYHPASGLCVESGIGNTVHLGSCQSVRSRWNYDASVKGPIGLMGSSSCISTQGNGLPAIMTENCSAPNNTLWSTVSSAQLQLGTRVLGKDGKEKWMCLDGSKSPLISTNECICITDSHCYPKLNPEKQWFKVITTNKQLLHQLQL.

The N-terminal stretch at 1 to 28 (MTSAGVAPTALRLLTALLLLLVAAPSHS) is a signal peptide. N-linked (GlcNAc...) asparagine glycans are attached at residues Asn102 and Asn113. The active-site Proton donor/acceptor is the Glu208. N-linked (GlcNAc...) asparagine glycans are attached at residues Asn212, Asn290, and Asn307. The active-site Nucleophile is the Glu473. Residues Asn474 and Asn479 are each glycosylated (N-linked (GlcNAc...) asparagine).

This sequence belongs to the glycosyl hydrolase 5 (cellulase A) family. In terms of processing, glycosylated.

May have glycosyl hydrolase activity. This is Glycosyl hydrolase 5 family protein from Chamaecyparis obtusa (Hinoki false-cypress).